The sequence spans 286 residues: Acyl-CoA-binding domain-containing protein 6 (286 aa).

A disordered region spans residues 1 to 24 (MASPGVLEESSSGEACSGGCPEQW). Low complexity predominate over residues 8–22 (EESSSGEACSGGCPE). An ACB domain is found at 32–117 (LQGQFEQAAK…VKKLDPDWSP (86 aa)). Residues 59-63 (YARYK), K85, and Y104 each bind an acyl-CoA. 2 ANK repeats span residues 182–211 (EGRC…HINM) and 215–244 (EGQT…DPSL).

Its subcellular location is the cytoplasm. It localises to the nucleus. Functionally, binds long-chain acyl-coenzyme A molecules with a strong preference for unsaturated C18:1-CoA. Does not bind fatty acids. Plays a role in protein N-myristoylation. The sequence is that of Acyl-CoA-binding domain-containing protein 6 (acbd6) from Xenopus tropicalis (Western clawed frog).